Here is a 189-residue protein sequence, read N- to C-terminus: uncharacterized protein (189 aa).

This is an uncharacterized protein from Saccharomyces cerevisiae (strain ATCC 204508 / S288c) (Baker's yeast).